A 146-amino-acid chain; its full sequence is D-aminoacyl-tRNA deacylase (146 aa).

Residues 137–138 (GP) carry the Gly-cisPro motif, important for rejection of L-amino acids motif.

The protein belongs to the DTD family. Homodimer.

The protein localises to the cytoplasm. The catalysed reaction is glycyl-tRNA(Ala) + H2O = tRNA(Ala) + glycine + H(+). It catalyses the reaction a D-aminoacyl-tRNA + H2O = a tRNA + a D-alpha-amino acid + H(+). In terms of biological role, an aminoacyl-tRNA editing enzyme that deacylates mischarged D-aminoacyl-tRNAs. Also deacylates mischarged glycyl-tRNA(Ala), protecting cells against glycine mischarging by AlaRS. Acts via tRNA-based rather than protein-based catalysis; rejects L-amino acids rather than detecting D-amino acids in the active site. By recycling D-aminoacyl-tRNA to D-amino acids and free tRNA molecules, this enzyme counteracts the toxicity associated with the formation of D-aminoacyl-tRNA entities in vivo and helps enforce protein L-homochirality. This is D-aminoacyl-tRNA deacylase from Bacillus thuringiensis (strain Al Hakam).